The primary structure comprises 369 residues: Histidinol-phosphate aminotransferase (369 aa).

Lys-223 is subject to N6-(pyridoxal phosphate)lysine.

The protein belongs to the class-II pyridoxal-phosphate-dependent aminotransferase family. Histidinol-phosphate aminotransferase subfamily. As to quaternary structure, homodimer. Pyridoxal 5'-phosphate serves as cofactor.

It carries out the reaction L-histidinol phosphate + 2-oxoglutarate = 3-(imidazol-4-yl)-2-oxopropyl phosphate + L-glutamate. Its pathway is amino-acid biosynthesis; L-histidine biosynthesis; L-histidine from 5-phospho-alpha-D-ribose 1-diphosphate: step 7/9. Its function is as follows. Catalyzes the conversion of imidazole acetol phosphate to histidinol phosphate. Can also transaminate aromatic amino acids and histidine in addition to histidinol phosphate. This Zymomonas mobilis subsp. mobilis (strain ATCC 31821 / ZM4 / CP4) protein is Histidinol-phosphate aminotransferase.